The sequence spans 215 residues: Adenylate kinase (215 aa).

10–15 contacts ATP; it reads GAGKGT. The segment at 30–59 is NMP; that stretch reads STGDIFRANISGKTELGMKAKGYMDKGLLV. AMP contacts are provided by residues T31, R36, 57–59, 85–88, and Q92; these read LLV and GFPR. Residues 126–163 form an LID region; it reads GRRVCSKCGASYHIEYNPTKVEGICDLCGSPVVQRKDD. R127 lines the ATP pocket. 2 residues coordinate Zn(2+): C130 and C133. 136-137 lines the ATP pocket; the sequence is SY. Zn(2+) contacts are provided by C150 and C153. The AMP site is built by R160 and R171. Residue Q199 participates in ATP binding.

This sequence belongs to the adenylate kinase family. In terms of assembly, monomer.

It is found in the cytoplasm. The catalysed reaction is AMP + ATP = 2 ADP. It participates in purine metabolism; AMP biosynthesis via salvage pathway; AMP from ADP: step 1/1. Functionally, catalyzes the reversible transfer of the terminal phosphate group between ATP and AMP. Plays an important role in cellular energy homeostasis and in adenine nucleotide metabolism. In Clostridium acetobutylicum (strain ATCC 824 / DSM 792 / JCM 1419 / IAM 19013 / LMG 5710 / NBRC 13948 / NRRL B-527 / VKM B-1787 / 2291 / W), this protein is Adenylate kinase.